Reading from the N-terminus, the 539-residue chain is Phosphoenolpyruvate carboxykinase (ATP) (539 aa).

Substrate contacts are provided by arginine 64, tyrosine 206, and lysine 212. Residues lysine 212, histidine 231, and glycine 247–threonine 255 contribute to the ATP site. The Mn(2+) site is built by lysine 212 and histidine 231. Aspartate 268 is a Mn(2+) binding site. Residues glutamate 296, arginine 332, arginine 448 to isoleucine 449, and threonine 454 each bind ATP. Arginine 332 contributes to the substrate binding site.

This sequence belongs to the phosphoenolpyruvate carboxykinase (ATP) family. In terms of assembly, monomer. The cofactor is Mn(2+).

Its subcellular location is the cytoplasm. The enzyme catalyses oxaloacetate + ATP = phosphoenolpyruvate + ADP + CO2. It participates in carbohydrate biosynthesis; gluconeogenesis. Involved in the gluconeogenesis. Catalyzes the conversion of oxaloacetate (OAA) to phosphoenolpyruvate (PEP) through direct phosphoryl transfer between the nucleoside triphosphate and OAA. This Pectobacterium atrosepticum (strain SCRI 1043 / ATCC BAA-672) (Erwinia carotovora subsp. atroseptica) protein is Phosphoenolpyruvate carboxykinase (ATP).